The chain runs to 508 residues: Lysine--tRNA ligase (508 aa).

Mg(2+) contacts are provided by Glu416 and Glu423.

It belongs to the class-II aminoacyl-tRNA synthetase family. In terms of assembly, homodimer. The cofactor is Mg(2+).

The protein resides in the cytoplasm. It carries out the reaction tRNA(Lys) + L-lysine + ATP = L-lysyl-tRNA(Lys) + AMP + diphosphate. This chain is Lysine--tRNA ligase, found in Prochlorococcus marinus (strain MIT 9313).